The chain runs to 237 residues: Homeobox protein Nkx-3.1 (237 aa).

A compositionally biased stretch (basic and acidic residues) spans 1-14 (MLRVAEPREPRVEA). Disordered regions lie at residues 1–96 (MLRV…EPES) and 108–130 (EHNPGDLASAPQVTKQPQKRSRA). Residues 24–34 (PTQSKRLTSFL) show a composition bias toward polar residues. 2 stretches are compositionally biased toward basic and acidic residues: residues 38 to 47 (ILRDRAERHG) and 57 to 71 (PDPRRDSAPEPDKAG). The homeobox DNA-binding region spans 125–184 (QKRSRAAFSHTQVIELERKFSHQKYLSAPERAHLAKNLKLTETQVKIWFQNRRYKTKRKQ).

The protein belongs to the NK-3 homeobox family. Interacts with serum response factor (SRF). Interacts with SPDEF. Interacts with WDR77. Interacts with TOPORS which polyubiquitinates NKX3-1 and induces its proteasomal degradation. Interacts with FEM1B. Post-translationally, ubiquitinated by TOPORS; monoubiquitinated at several residues and also polyubiquitinated on single residues. In terms of tissue distribution, expressed mostly in the male urogenital tract, with highest expression in the epithelial cells lining the ducts of anterior, dorsolateral and ventral prostate and in the bulbourethral gland, and much lower in the seminal vesicle and the testis. Expression in the prostate increases during sexual maturation and is drastically reduced following castration. Expressed also in brain (hippocampus and external granular layer of the cerebral cortex), kidney (intralobular arteries), thymus and adrenal and salivary glands.

It localises to the nucleus. In terms of biological role, transcription factor, which binds preferentially the consensus sequence 5'-TAAGT[AG]-3' and can behave as a transcriptional repressor. Plays an important role in normal prostate development, regulating proliferation of glandular epithelium and in the formation of ducts in prostate. Acts as a tumor suppressor controlling prostate carcinogenesis, as shown by the ability to suppress growth and tumorigenicity of prostate carcinoma cells. Plays a role in the formation of minor salivary glands (particularly palatine and lingual glands). The polypeptide is Homeobox protein Nkx-3.1 (Mus musculus (Mouse)).